The chain runs to 874 residues: MKSAEIREAFLGFFEEQGHTRVASSSLIPGNDPTLLFTNAGMNQFKDCFLGQEKRAYTRAVTSQKCVRAGGKHNDLENVGYTARHHTFFEMLGNFSFGDYFKRDAITYAWTFLTSEKWLNLPKEKLWVTVYATDDEAYDIWTKEIGVPAERMVRIGDNKGAPYASDNFWTMGDTGPCGPCSEIFFDHGPEIWGGPPGSPEEDGDRYIEIWNNVFMQFNRTADGVLHPLPAPSVDTGMGLERVSAVLQHVHSNYEIDLFQSLLAASAKAIGCSNDNQASLKVVADHIRSCGFLIADGVLPSNEGRGYVLRRIIRRACRHGNKLGAKGSFFYQIVAALVAEMGSAFPELVQQQSHIERVLKGEEEQFAKTLEQGLKILEQDLADLKGTVVPGEVVFKLYDTYGFPMDLTGDIARERNLTLDEAGFEREMDAQRVRARSASSFGMDYNSLVKVDVATQFTGYSATTGSASVVALYKEGQSVSHLNEGEEGVVILDITPFYAESGGQIGDSGFLQAGDARFDVSDTTKTGGAFLHHGVVASGSLSVGAQVETQVADEVRDATKLNHSATHLLHAALRQVLGEHVQQKGSLVDSQRLRFDFSHFEAIKAEQLRALEDIVNAEIRKNTEVMTEETDIDTAKKKGAMALFGEKYGDSVRVLSMGGEFSVELCGGIHASRTGDIALFKIVSEGGVAAGVRRIEAVTGAAALAWLNSAEDQLKEAATLVKGNRDNLLDKLTAVIERNRLLEKQLEQLQAKAASAAGDDLSSAALDVKGVKVLATRLDGQDGKALLALVDQLKNKLGRAVILLGSVHEDKVVLVAGVTKDLTGQLKAGDLMKQAAAAVGGKGGGRPDMAQGGGVDAGALDSALALAVPFVEQGI.

Zn(2+) contacts are provided by histidine 562, histidine 566, cysteine 665, and histidine 669.

The protein belongs to the class-II aminoacyl-tRNA synthetase family. Requires Zn(2+) as cofactor.

It localises to the cytoplasm. The catalysed reaction is tRNA(Ala) + L-alanine + ATP = L-alanyl-tRNA(Ala) + AMP + diphosphate. Functionally, catalyzes the attachment of alanine to tRNA(Ala) in a two-step reaction: alanine is first activated by ATP to form Ala-AMP and then transferred to the acceptor end of tRNA(Ala). Also edits incorrectly charged Ser-tRNA(Ala) and Gly-tRNA(Ala) via its editing domain. This is Alanine--tRNA ligase from Pseudomonas syringae pv. syringae (strain B728a).